We begin with the raw amino-acid sequence, 86 residues long: Small ribosomal subunit protein uS17 (86 aa).

This sequence belongs to the universal ribosomal protein uS17 family. As to quaternary structure, part of the 30S ribosomal subunit.

Its function is as follows. One of the primary rRNA binding proteins, it binds specifically to the 5'-end of 16S ribosomal RNA. The chain is Small ribosomal subunit protein uS17 from Streptococcus pyogenes serotype M6 (strain ATCC BAA-946 / MGAS10394).